Consider the following 538-residue polypeptide: Nectin-2 (538 aa).

Residues 1–31 (MARAAALLPSRSPPTPLLWPLLLLLLLETGA) form the signal peptide. An Ig-like V-type domain is found at 32–156 (QDVRVQVLPE…KGSVRGMTWL (125 aa)). At 32 to 360 (QDVRVQVLPE…NTAGAGATGG (329 aa)) the chain is on the extracellular side. 3 cysteine pairs are disulfide-bonded: C54–C140, C183–C238, and C283–C329. N-linked (GlcNAc...) asparagine glycosylation occurs at N137. 2 Ig-like C2-type domains span residues 162–256 (PKNQ…VTLS) and 261–345 (PEVS…QVIF). A glycan (N-linked (GlcNAc...) asparagine) is linked at N324. Residues 361 to 381 (IIGGIIAAIIATAVAATGILI) form a helical membrane-spanning segment. Residues 382–538 (CRQQRKEQTL…GFVMSRAMYV (157 aa)) are Cytoplasmic-facing. The segment at 390 to 414 (TLQGAEEDEDLEGPPSYKPPTPKAK) is disordered. T410 bears the Phosphothreonine mark. Residues S433, G465, and G470 each carry the phosphoserine modification. The interval 462–489 (ERSGPLHPGATSLGSPIPVPPGPPAVED) is disordered.

It belongs to the nectin family. As to quaternary structure, can form trans-heterodimers with NECTIN3. Interacts with CD226 or with PVRIG; these interactions are competitive and have a differential functional outcome on T-cell activation, either positive or negative, respectively. Binds with low affinity to TIGIT. (Microbial infection) Interacts with herpes simplex virus 1 (HHV-1) mutant Rid1, herpes simplex virus 1 (HHV-2) and pseudorabies virus (PRV) envelope glycoprotein D. In terms of tissue distribution, ubiquitous.

Its subcellular location is the cell membrane. Its function is as follows. Modulator of T-cell signaling. Can be either a costimulator of T-cell function, or a coinhibitor, depending on the receptor it binds to. Upon binding to CD226, stimulates T-cell proliferation and cytokine production, including that of IL2, IL5, IL10, IL13, and IFNG. Upon interaction with PVRIG, inhibits T-cell proliferation. These interactions are competitive. Probable cell adhesion protein. Functionally, (Microbial infection) Acts as a receptor for herpes simplex virus 1 (HHV-1) mutant Rid1, herpes simplex virus 1 (HHV-2) and pseudorabies virus (PRV). The chain is Nectin-2 from Homo sapiens (Human).